The sequence spans 138 residues: MIKLVEPLKKLIIDGVGVSGEEVEEQLFGGFCECGGVMYQRFWFTRDSEKILVSECEKCWKHKAMIFNSHSFVSHQSVEVLGKYDFVELLKETLGEKEFESLVRKAKNEEFDPVSYTRAKKMLTSMNLDIDEILDQVR.

This is an uncharacterized protein from Archaeoglobus fulgidus (strain ATCC 49558 / DSM 4304 / JCM 9628 / NBRC 100126 / VC-16).